A 399-amino-acid polypeptide reads, in one-letter code: uncharacterized protein (399 aa).

10 helical membrane passes run 6-26, 27-47, 60-80, 111-131, 147-167, 173-193, 195-215, 220-240, 328-348, and 362-382; these read HLTFTINLLVSLFFLTILIIP, KGYNYAPIILSAIGLIYFIPL, LIFSFLFYFFTFLLSIIINKD, ILYAIPSSALITGCVALFQKF, MGNIAISLATFSIVITLHFFI, STLFGFVAIILAIMTSALSGA, GGWIGLPVVVGIILFLYKEFI, IITLIAIITIGLTALITSPKF, GLVGFIALILIILTPIFYFIK, and ILGIIHIVSHIFYFTSQSFLA.

It localises to the cell membrane. This is an uncharacterized protein from Haemophilus influenzae (strain ATCC 51907 / DSM 11121 / KW20 / Rd).